The primary structure comprises 695 residues: Segment polarity protein dishevelled homolog DVL-1 (695 aa).

One can recognise a DIX domain in the interval 1–85 (MAETKIIYHM…RVVSWLVLAE (85 aa)). The tract at residues 89-235 (SDAGSQGTDS…QRLRQTDRAS (147 aa)) is disordered. Residues 142 to 151 (SHRRERARRR) show a composition bias toward basic residues. A compositionally biased stretch (basic and acidic residues) spans 152–171 (NRDEAARTNGHPRGDRRRDL). Residues 177–192 (SASTVLSSELESSSFI) show a composition bias toward low complexity. Ser194 carries the post-translational modification Phosphoserine. Residues 201 to 214 (SRLSSSTEQSTSSR) are compositionally biased toward low complexity. Positions 215–228 (LVRKHKCRRRKQRL) are enriched in basic residues. The region spanning 251-323 (TVTLNMERHH…NDDAVRVLRE (73 aa)) is the PDZ domain. One can recognise a DEP domain in the interval 425–499 (PDSGLEIRDR…SEQCYYVFGD (75 aa)). Low complexity predominate over residues 559-580 (SCGSGSAGSQQSEGSKSSGSTR). Residues 559–641 (SCGSGSAGSQ…SQASAVAPGL (83 aa)) form a disordered region. The segment covering 622–635 (SQLSRGSSPRSQAS) has biased composition (polar residues).

It belongs to the DSH family. In terms of assembly, interacts with CXXC4. Interacts (via PDZ domain) with TMEM88. Interacts with BRD7 and INVS. Interacts (via PDZ domain) with VANGL1 and VANGL2 (via C-terminus). Interacts (via PDZ domain) with NXN. Interacts with ARRB1; the interaction is enhanced by phosphorylation of DVL1. Interacts with CYLD. Interacts (via PDZ domain) with RYK. Self-associates (via DIX domain) and forms higher homooligomers. Interacts (via PDZ domain) with DACT1 and FZD7, where DACT1 and FZD7 compete for the same binding site. Interacts (via DEP domain) with MUSK; the interaction is direct and mediates the formation a DVL1, MUSK and PAK1 ternary complex involved in AChR clustering. Interacts with DCDC2. Interacts with FOXK2. Interacts with PKD1 (via extracellular domain). Interacts (via PDZ domain) with CCDC88C/DAPLE; competes with CCDC88C for binding to frizzled receptor FZD7 and dissociates from CCDC88C following initiation of non-canonical Wnt signaling when CCDC88C displaces DVL1 from ligand-activated FZD7. Post-translationally, ubiquitinated; undergoes both 'Lys-48'-linked ubiquitination, leading to its subsequent degradation by the ubiquitin-proteasome pathway, and 'Lys-63'-linked ubiquitination. The interaction with INVS is required for ubiquitination. Deubiquitinated by CYLD, which acts on 'Lys-63'-linked ubiquitin chains. High levels are seen in the brain, testis and kidney, lower levels in the ovary, breast, muscle, liver and small intestine, and very low levels are seen in the spleen and thymus. A moderate level expression is seen in the heart.

It localises to the cell membrane. It is found in the cytoplasm. The protein resides in the cytosol. The protein localises to the cytoplasmic vesicle. Its function is as follows. Participates in Wnt signaling by binding to the cytoplasmic C-terminus of frizzled family members and transducing the Wnt signal to down-stream effectors. Plays a role both in canonical and non-canonical Wnt signaling. Plays a role in the signal transduction pathways mediated by multiple Wnt genes. Required for LEF1 activation upon WNT1 and WNT3A signaling. DVL1 and PAK1 form a ternary complex with MUSK which is important for MUSK-dependent regulation of AChR clustering during the formation of the neuromuscular junction (NMJ). The protein is Segment polarity protein dishevelled homolog DVL-1 (Dvl1) of Mus musculus (Mouse).